The primary structure comprises 1056 residues: 120.7 kDa protein in NOF-FB transposable element (1056 aa).

The tract at residues lysine 716–arginine 749 is disordered. Residues asparagine 724–lysine 736 show a composition bias toward acidic residues. The span at glutamate 737 to arginine 749 shows a compositional bias: basic and acidic residues.

The protein resides in the nucleus. In terms of biological role, may be involved in the transposition of NOF-FB and other FB elements. The sequence is that of 120.7 kDa protein in NOF-FB transposable element (NOF) from Drosophila melanogaster (Fruit fly).